The following is a 466-amino-acid chain: Sulfate adenylyltransferase subunit 1 (466 aa).

Positions 22 to 237 (KELVRFLTCG…LNTIDVKTQE (216 aa)) constitute a tr-type G domain. The interval 31-38 (GSVDDGKS) is G1. Residue 31–38 (GSVDDGKS) participates in GTP binding. The tract at residues 89 to 93 (GITID) is G2. Residues 110–113 (DTPG) form a G3 region. Residues 110-114 (DTPGH) and 165-168 (NKMD) contribute to the GTP site. The segment at 165–168 (NKMD) is G4. Positions 202-204 (SAL) are G5.

This sequence belongs to the TRAFAC class translation factor GTPase superfamily. Classic translation factor GTPase family. CysN/NodQ subfamily. As to quaternary structure, heterodimer composed of CysD, the smaller subunit, and CysN.

It carries out the reaction sulfate + ATP + H(+) = adenosine 5'-phosphosulfate + diphosphate. It participates in sulfur metabolism; hydrogen sulfide biosynthesis; sulfite from sulfate: step 1/3. In terms of biological role, with CysD forms the ATP sulfurylase (ATPS) that catalyzes the adenylation of sulfate producing adenosine 5'-phosphosulfate (APS) and diphosphate, the first enzymatic step in sulfur assimilation pathway. APS synthesis involves the formation of a high-energy phosphoric-sulfuric acid anhydride bond driven by GTP hydrolysis by CysN coupled to ATP hydrolysis by CysD. In Colwellia psychrerythraea (strain 34H / ATCC BAA-681) (Vibrio psychroerythus), this protein is Sulfate adenylyltransferase subunit 1.